The following is a 282-amino-acid chain: Elongation factor Ts (282 aa).

The involved in Mg(2+) ion dislocation from EF-Tu stretch occupies residues 79 to 82 (TDFV).

It belongs to the EF-Ts family.

Its subcellular location is the cytoplasm. Functionally, associates with the EF-Tu.GDP complex and induces the exchange of GDP to GTP. It remains bound to the aminoacyl-tRNA.EF-Tu.GTP complex up to the GTP hydrolysis stage on the ribosome. The chain is Elongation factor Ts from Shewanella loihica (strain ATCC BAA-1088 / PV-4).